A 74-amino-acid polypeptide reads, in one-letter code: Consomatin Gh1 (74 aa).

The N-terminal stretch at 1–22 (MQTACWVMVMMMVWITAPLSEG) is a signal peptide. A propeptide spanning residues 23–57 (GKLNDVIRGLVPDDVTPQLILRSLFFHRPSDSVVR) is cleaved from the precursor. An intrachain disulfide couples C65 to C70. W67 carries the D-tryptophan modification. 4-hydroxyproline is present on residues P71, P72, and P74.

Belongs to the conotoxin C superfamily. Consomatin family. In terms of tissue distribution, expressed by the venom duct.

The protein resides in the secreted. Moderately activates human somatostatin receptors (SSTR) with a preferential activation of SSTR1 and SSTR4. In vivo, does not cause behavioral changes in mice within a few minutes of intracranial injection, but causes a progressive loss of movement thereafter. Four to five hours after injection, mice recover, even with the highest dose tested. Shows antinociception and antihyperalgesia activities in two mouse models of acute pain, most probably by acting outside the central nervous system. The sequence is that of Consomatin Gh1 from Conus grahami (Cone snail).